Here is a 419-residue protein sequence, read N- to C-terminus: CinA-like protein (419 aa).

This sequence belongs to the CinA family.

This chain is CinA-like protein, found in Parasynechococcus marenigrum (strain WH8102).